Reading from the N-terminus, the 131-residue chain is MYMARMLSEMSTVKRPDGCYIVDQEHYQIVSGYAGELLPSNSNVCNCGISVALQKLENKSHNGMDCIIYTSSFPDCSHCLEKILNLKISKIWHWNSPTTTKELKILEMLEASSIQCEKYTPTRTISINFNN.

Positions 1-116 (MYMARMLSEM…EMLEASSIQC (116 aa)) constitute a CMP/dCMP-type deaminase domain.

This is an uncharacterized protein from Caenorhabditis elegans.